We begin with the raw amino-acid sequence, 106 residues long: Large ribosomal subunit protein uL24 (106 aa).

Belongs to the universal ribosomal protein uL24 family. Part of the 50S ribosomal subunit.

Its function is as follows. One of two assembly initiator proteins, it binds directly to the 5'-end of the 23S rRNA, where it nucleates assembly of the 50S subunit. Functionally, one of the proteins that surrounds the polypeptide exit tunnel on the outside of the subunit. The polypeptide is Large ribosomal subunit protein uL24 (Acidithiobacillus ferrooxidans (strain ATCC 53993 / BNL-5-31) (Leptospirillum ferrooxidans (ATCC 53993))).